The chain runs to 178 residues: Large ribosomal subunit protein uL6 (178 aa).

This sequence belongs to the universal ribosomal protein uL6 family. In terms of assembly, part of the 50S ribosomal subunit.

Functionally, this protein binds to the 23S rRNA, and is important in its secondary structure. It is located near the subunit interface in the base of the L7/L12 stalk, and near the tRNA binding site of the peptidyltransferase center. The protein is Large ribosomal subunit protein uL6 of Kocuria rhizophila (strain ATCC 9341 / DSM 348 / NBRC 103217 / DC2201).